The chain runs to 477 residues: Otolin-1 (477 aa).

Residues methionine 1–alanine 23 form the signal peptide. Disordered regions lie at residues histidine 28–glutamate 55 and glutamine 111–leucine 337. Residues lysine 33–lysine 42 show a composition bias toward basic and acidic residues. Residues glycine 116–proline 175 enclose the Collagen-like 1 domain. 2 positions are modified to hydroxyproline: proline 133 and proline 136. Basic and acidic residues predominate over residues tyrosine 147–aspartate 159. Hydroxyproline is present on residues proline 163, proline 166, and proline 169. Lysine 178 carries the 5-hydroxylysine modification. An O-linked (Gal...) hydroxylysine glycan is attached at lysine 178. Gly residues predominate over residues glycine 182–glycine 191. An N-linked (GlcNAc...) asparagine glycan is attached at asparagine 202. Collagen-like domains are found at residues glycine 209–lysine 268 and glycine 278–leucine 337. Proline 223 is modified (hydroxyproline). Basic and acidic residues-rich tracts occupy residues lysine 226–aspartate 240 and serine 247–serine 277. Proline 283 and proline 301 each carry hydroxyproline. Residues leucine 298 to lysine 310 are compositionally biased toward low complexity. Lysine 310 carries the post-translational modification 5-hydroxylysine. O-linked (Gal...) hydroxylysine glycosylation occurs at lysine 310. In terms of domain architecture, C1q spans alanine 338 to serine 473. Asparagine 381 is a glycosylation site (N-linked (GlcNAc...) asparagine).

It belongs to the OTOL1 family. Homooligomer; disulfide-linked; probably forms homotrimers. Interacts with OC90. Interacts with CBLN1.

It is found in the secreted. Its subcellular location is the extracellular space. The protein localises to the extracellular matrix. Functionally, collagen-like protein specifically expressed in the inner ear, which provides an organic scaffold for otoconia, a calcium carbonate structure in the saccule and utricle of the ear. Acts as a scaffold for biomineralization: sequesters calcium and forms interconnecting fibrils between otoconia that are incorporated into the calcium crystal structure. Together with OC90, modulates calcite crystal morphology and growth kinetics. The sequence is that of Otolin-1 from Homo sapiens (Human).